Consider the following 242-residue polypeptide: Ubiquinone biosynthesis O-methyltransferase (242 aa).

Residues Arg44, Gly64, Asp85, and Met129 each coordinate S-adenosyl-L-methionine.

This sequence belongs to the methyltransferase superfamily. UbiG/COQ3 family.

It carries out the reaction a 3-demethylubiquinol + S-adenosyl-L-methionine = a ubiquinol + S-adenosyl-L-homocysteine + H(+). The catalysed reaction is a 3-(all-trans-polyprenyl)benzene-1,2-diol + S-adenosyl-L-methionine = a 2-methoxy-6-(all-trans-polyprenyl)phenol + S-adenosyl-L-homocysteine + H(+). The protein operates within cofactor biosynthesis; ubiquinone biosynthesis. Functionally, O-methyltransferase that catalyzes the 2 O-methylation steps in the ubiquinone biosynthetic pathway. The polypeptide is Ubiquinone biosynthesis O-methyltransferase (Salmonella paratyphi A (strain ATCC 9150 / SARB42)).